The following is a 536-amino-acid chain: Prolyl 3-hydroxylase sudestada1 (536 aa).

The tract at residues 1-35 (METSSSSPVKPRRKDKDEDGRAEQEDSADQVGEPH) is disordered. The segment covering 14–24 (KDKDEDGRAEQ) has biased composition (basic and acidic residues). Positions 165–275 (KLDYVSASCS…RLTINGWFHG (111 aa)) constitute a Fe2OG dioxygenase domain. Residues His185 and Asp187 each coordinate Fe cation. A 2-oxoglutarate-binding site is contributed by Tyr199. His254 serves as a coordination point for Fe cation. Arg266 contributes to the 2-oxoglutarate binding site. Residues 467–486 (PTAKAPTDGRRSDYDDEEED) form a disordered region.

This sequence belongs to the TPA1 family. As to quaternary structure, monomer. Fe(2+) is required as a cofactor. Requires L-ascorbate as cofactor. In terms of tissue distribution, in third-instar larval tissues,highly expressed in the fat body, with significant expression in other organs including the brain, salivary glands, imaginal disks and gut.

The protein localises to the nucleus. The protein resides in the cytoplasm. The enzyme catalyses [ribosomal protein uS12]-L-proline + 2-oxoglutarate + O2 = [ribosomal protein uS12]-(3S)-3-hydroxy-L-proline + succinate + CO2. Prolyl 3-hydroxylase that catalyzes 3-hydroxylation of 'Pro-62' of small ribosomal subunit uS12 (RpS23), thereby regulating protein translation termination efficiency. This chain is Prolyl 3-hydroxylase sudestada1 (sud1), found in Drosophila melanogaster (Fruit fly).